The following is a 463-amino-acid chain: Cysteine--tRNA ligase (463 aa).

Residue Cys27 participates in Zn(2+) binding. The short motif at 29–39 (PTVYGLIHIGN) is the 'HIGH' region element. Residues Cys207, His232, and Glu236 each coordinate Zn(2+). The 'KMSKS' region signature appears at 264–268 (KMSKS). Lys267 contributes to the ATP binding site.

This sequence belongs to the class-I aminoacyl-tRNA synthetase family. Monomer. Requires Zn(2+) as cofactor.

It is found in the cytoplasm. The catalysed reaction is tRNA(Cys) + L-cysteine + ATP = L-cysteinyl-tRNA(Cys) + AMP + diphosphate. This is Cysteine--tRNA ligase from Pseudothermotoga lettingae (strain ATCC BAA-301 / DSM 14385 / NBRC 107922 / TMO) (Thermotoga lettingae).